The chain runs to 186 residues: UPF0397 protein lp_0150 (186 aa).

The next 5 helical transmembrane spans lie at 12-32, 45-65, 76-96, 112-132, and 151-171; these read VVAT…VAIP, GFLA…AVFI, GSPW…FGLA, LVWF…LLAP, and VITW…LLVL.

It belongs to the UPF0397 family.

The protein resides in the cell membrane. The polypeptide is UPF0397 protein lp_0150 (Lactiplantibacillus plantarum (strain ATCC BAA-793 / NCIMB 8826 / WCFS1) (Lactobacillus plantarum)).